Here is a 355-residue protein sequence, read N- to C-terminus: Anthranilate phosphoribosyltransferase (355 aa).

5-phospho-alpha-D-ribose 1-diphosphate contacts are provided by residues glycine 102, 105–106 (GD), serine 110, 112–115 (NIST), 130–138 (KHGNRSVSS), and serine 142. Glycine 102 contacts anthranilate. Residue serine 114 coordinates Mg(2+). An anthranilate-binding site is contributed by asparagine 133. Arginine 188 is a binding site for anthranilate. Aspartate 246 and glutamate 247 together coordinate Mg(2+).

It belongs to the anthranilate phosphoribosyltransferase family. In terms of assembly, homodimer. Mg(2+) is required as a cofactor.

It catalyses the reaction N-(5-phospho-beta-D-ribosyl)anthranilate + diphosphate = 5-phospho-alpha-D-ribose 1-diphosphate + anthranilate. The protein operates within amino-acid biosynthesis; L-tryptophan biosynthesis; L-tryptophan from chorismate: step 2/5. Catalyzes the transfer of the phosphoribosyl group of 5-phosphorylribose-1-pyrophosphate (PRPP) to anthranilate to yield N-(5'-phosphoribosyl)-anthranilate (PRA). This Pectobacterium carotovorum subsp. carotovorum (strain PC1) protein is Anthranilate phosphoribosyltransferase.